Reading from the N-terminus, the 225-residue chain is Ribonuclease 3 (225 aa).

The region spanning Met7–Gly129 is the RNase III domain. Glu42 lines the Mg(2+) pocket. Residue Asp46 is part of the active site. 2 residues coordinate Mg(2+): Asp115 and Glu118. Residue Glu118 is part of the active site. One can recognise a DRBM domain in the interval Asp155–Arg225.

This sequence belongs to the ribonuclease III family. As to quaternary structure, homodimer. Mg(2+) is required as a cofactor.

Its subcellular location is the cytoplasm. The catalysed reaction is Endonucleolytic cleavage to 5'-phosphomonoester.. Digests double-stranded RNA. Involved in the processing of primary rRNA transcript to yield the immediate precursors to the large and small rRNAs (23S and 16S). Processes some mRNAs, and tRNAs when they are encoded in the rRNA operon. Processes pre-crRNA and tracrRNA of type II CRISPR loci if present in the organism. This Shewanella sediminis (strain HAW-EB3) protein is Ribonuclease 3.